The primary structure comprises 304 residues: Coenzyme PQQ synthesis protein B (304 aa).

It belongs to the PqqB family.

Its pathway is cofactor biosynthesis; pyrroloquinoline quinone biosynthesis. In terms of biological role, may be involved in the transport of PQQ or its precursor to the periplasm. In Gluconobacter oxydans (strain 621H) (Gluconobacter suboxydans), this protein is Coenzyme PQQ synthesis protein B.